Consider the following 286-residue polypeptide: 3-hydroxyanthranilate 3,4-dioxygenase (286 aa).

A domain A (catalytic) region spans residues 1–160 (MERRLGVRAW…SEQYRTGKPI (160 aa)). O2 is bound at residue arginine 43. The Fe cation site is built by histidine 47, glutamate 53, and histidine 91. Residue glutamate 53 participates in substrate binding. Arginine 95 and glutamate 105 together coordinate substrate. The linker stretch occupies residues 161-177 (PDQLLKEPPFPLSTRSI). The domain B stretch occupies residues 178–286 (MEPMSLDAWL…QDPACKKPLG (109 aa)).

It belongs to the 3-HAO family. As to quaternary structure, monomer. Fe(2+) is required as a cofactor.

The protein resides in the cytoplasm. It localises to the cytosol. It carries out the reaction 3-hydroxyanthranilate + O2 = (2Z,4Z)-2-amino-3-carboxymuconate 6-semialdehyde. It functions in the pathway cofactor biosynthesis; NAD(+) biosynthesis; quinolinate from L-kynurenine: step 3/3. Catalyzes the oxidative ring opening of 3-hydroxyanthranilate to 2-amino-3-carboxymuconate semialdehyde, which spontaneously cyclizes to quinolinate. The chain is 3-hydroxyanthranilate 3,4-dioxygenase from Homo sapiens (Human).